The following is a 556-amino-acid chain: Glycosyl hydrolase 5 family protein (556 aa).

An N-terminal signal peptide occupies residues 1-28 (MTSAGVAPTALRLLTALLLLLVAAPSHS). Residues Asn-102 and Asn-113 are each glycosylated (N-linked (GlcNAc...) asparagine). Glu-208 acts as the Proton donor/acceptor in catalysis. N-linked (GlcNAc...) asparagine glycosylation is found at Asn-212, Asn-290, and Asn-307. The active-site Nucleophile is the Glu-473. 2 N-linked (GlcNAc...) asparagine glycosylation sites follow: Asn-474 and Asn-479.

Belongs to the glycosyl hydrolase 5 (cellulase A) family. Post-translationally, glycosylated.

Its function is as follows. May have glycosyl hydrolase activity. The chain is Glycosyl hydrolase 5 family protein from Chamaecyparis obtusa (Hinoki false-cypress).